A 232-amino-acid polypeptide reads, in one-letter code: Somatolactin (232 aa).

The N-terminal stretch at 1 to 16 (MHNWKGVWLCSLFLTF) is a signal peptide. Disulfide bonds link C31–C41, C91–C206, and C223–C231. N147 carries an N-linked (GlcNAc...) asparagine glycan.

This sequence belongs to the somatotropin/prolactin family. Pituitary gland.

Its subcellular location is the secreted. The sequence is that of Somatolactin from Protopterus annectens (African lungfish).